The chain runs to 202 residues: Transmembrane 4 L6 family member 1 (202 aa).

Residues 1–9 lie on the Cytoplasmic side of the membrane; that stretch reads MCYGKCARC. The helical transmembrane segment at 10-30 threads the bilayer; the sequence is IGHSLVGLALLCIAANILLYF. The Extracellular portion of the chain corresponds to 31–49; that stretch reads PNGETKYASENHLSRFVWF. Residues 50–70 form a helical membrane-spanning segment; sequence FSGIVGGGLLMLLPAFVFIGL. Topologically, residues 71 to 93 are cytoplasmic; that stretch reads EQDDCCGCCGHENCGKRCAMLSS. Residues 94–114 traverse the membrane as a helical segment; that stretch reads VLAALIGIAGSGYCVIVAALG. Over 115-161 the chain is Extracellular; that stretch reads LAEGPLCLDSLGQWNYTFASTEGQYLLDTSTWSECTEPKHIVEWNVS. Residues Asn129 and Asn159 are each glycosylated (N-linked (GlcNAc...) asparagine). A helical transmembrane segment spans residues 162–182; the sequence is LFSILLALGGIEFILCLIQVI. Residues 183-202 lie on the Cytoplasmic side of the membrane; it reads NGVLGGICGFCCSHQQQYDC.

The protein belongs to the L6 tetraspanin family. In terms of assembly, present in high molecular weight complexes in tumor cells. Interacts with SDCBP2. Highly expressed in lung, breast, colon and ovarian carcinomas. It is also present on some normal cells, endothelial cells in particular.

Its subcellular location is the membrane. The sequence is that of Transmembrane 4 L6 family member 1 (TM4SF1) from Homo sapiens (Human).